Here is a 302-residue protein sequence, read N- to C-terminus: Stanniocalcin-2 (302 aa).

The signal sequence occupies residues 1–24; it reads MCAERLGQFMTLALVLATFDPARG. Residues 23–44 are disordered; that stretch reads RGTDATNPPEGPQDRSSQQKGR. N-linked (GlcNAc...) asparagine glycosylation occurs at asparagine 73. A disordered region spans residues 217-302; sequence KPPTAPPERQ…EQSEYSDIRR (86 aa). Residues 227-264 show a composition bias toward basic and acidic residues; that stretch reads PQVDRTKLSRAHHGEAGHHLPEPSSRETGRGAKGERGS. Residues serine 250 and serine 251 each carry the phosphoserine; by FAM20C modification. Threonine 254 bears the Phosphothreonine; by FAM20C mark.

The protein belongs to the stanniocalcin family. Homodimer; disulfide-linked. As to expression, expressed in a variety of tissues including muscle, heart, pancreas, kidney, spleen, prostate, small intestine, colon and peripheral blood leukocytes.

The protein resides in the secreted. Has an anti-hypocalcemic action on calcium and phosphate homeostasis. The protein is Stanniocalcin-2 (STC2) of Homo sapiens (Human).